Consider the following 122-residue polypeptide: Large ribosomal subunit protein uL14 (122 aa).

It belongs to the universal ribosomal protein uL14 family. As to quaternary structure, part of the 50S ribosomal subunit. Forms a cluster with proteins L3 and L19. In the 70S ribosome, L14 and L19 interact and together make contacts with the 16S rRNA in bridges B5 and B8.

Functionally, binds to 23S rRNA. Forms part of two intersubunit bridges in the 70S ribosome. In Solibacter usitatus (strain Ellin6076), this protein is Large ribosomal subunit protein uL14.